A 250-amino-acid polypeptide reads, in one-letter code: Vitamin B12 import ATP-binding protein BtuD (250 aa).

Residues 3 to 233 (LRQASVLPRL…EVLSPVFGVA (231 aa)) form the ABC transporter domain. 29 to 36 (GPNGAGKS) provides a ligand contact to ATP.

Belongs to the ABC transporter superfamily. Vitamin B12 importer (TC 3.A.1.13.1) family. The complex is composed of two ATP-binding proteins (BtuD), two transmembrane proteins (BtuC) and a solute-binding protein (BtuF).

Its subcellular location is the cell inner membrane. It catalyses the reaction an R-cob(III)alamin(out) + ATP + H2O = an R-cob(III)alamin(in) + ADP + phosphate + H(+). Its function is as follows. Part of the ABC transporter complex BtuCDF involved in vitamin B12 import. Responsible for energy coupling to the transport system. This is Vitamin B12 import ATP-binding protein BtuD from Pectobacterium atrosepticum (strain SCRI 1043 / ATCC BAA-672) (Erwinia carotovora subsp. atroseptica).